The sequence spans 416 residues: Glutamyl-tRNA reductase (416 aa).

Substrate is bound by residues Thr51–Arg54, Ser110, Glu115–Gln117, and Gln121. Cys52 functions as the Nucleophile in the catalytic mechanism. Gly190–Gly195 is an NADP(+) binding site.

It belongs to the glutamyl-tRNA reductase family. As to quaternary structure, homodimer.

The catalysed reaction is (S)-4-amino-5-oxopentanoate + tRNA(Glu) + NADP(+) = L-glutamyl-tRNA(Glu) + NADPH + H(+). Its pathway is porphyrin-containing compound metabolism; protoporphyrin-IX biosynthesis; 5-aminolevulinate from L-glutamyl-tRNA(Glu): step 1/2. In terms of biological role, catalyzes the NADPH-dependent reduction of glutamyl-tRNA(Glu) to glutamate 1-semialdehyde (GSA). The protein is Glutamyl-tRNA reductase of Francisella tularensis subsp. holarctica (strain OSU18).